Reading from the N-terminus, the 318-residue chain is Ferrochelatase (318 aa).

Residues His-186 and Glu-264 each contribute to the Fe cation site.

Belongs to the ferrochelatase family.

The protein resides in the cytoplasm. The catalysed reaction is heme b + 2 H(+) = protoporphyrin IX + Fe(2+). It functions in the pathway porphyrin-containing compound metabolism; protoheme biosynthesis; protoheme from protoporphyrin-IX: step 1/1. Its function is as follows. Catalyzes the ferrous insertion into protoporphyrin IX. This Chlamydia abortus (strain DSM 27085 / S26/3) (Chlamydophila abortus) protein is Ferrochelatase.